We begin with the raw amino-acid sequence, 233 residues long: Orotidine 5'-phosphate decarboxylase (233 aa).

Residues D9, K31, 58–67, T120, R182, Q191, G211, and R212 each bind substrate; that span reads DLKLHDIPNT. Residue K60 is the Proton donor of the active site.

Belongs to the OMP decarboxylase family. Type 1 subfamily. In terms of assembly, homodimer.

The catalysed reaction is orotidine 5'-phosphate + H(+) = UMP + CO2. It participates in pyrimidine metabolism; UMP biosynthesis via de novo pathway; UMP from orotate: step 2/2. In terms of biological role, catalyzes the decarboxylation of orotidine 5'-monophosphate (OMP) to uridine 5'-monophosphate (UMP). The chain is Orotidine 5'-phosphate decarboxylase from Listeria monocytogenes serotype 4a (strain HCC23).